A 134-amino-acid chain; its full sequence is Arsenate reductase (134 aa).

Active-site nucleophile residues include Cys11, Cys83, and Cys90. Cystine bridges form between Cys11-Cys83 and Cys83-Cys90.

The protein belongs to the low molecular weight phosphotyrosine protein phosphatase family. Thioredoxin-coupled ArsC subfamily.

Its subcellular location is the cytoplasm. The enzyme catalyses arsenate + [thioredoxin]-dithiol + H(+) = arsenite + [thioredoxin]-disulfide + H2O. Functionally, catalyzes the reduction of arsenate [As(V)] to arsenite [As(III)]. The chain is Arsenate reductase from Bacillus cereus (strain Q1).